The sequence spans 296 residues: Lipoyl synthase (296 aa).

Cysteine 37, cysteine 42, cysteine 48, cysteine 63, cysteine 67, cysteine 70, and serine 276 together coordinate [4Fe-4S] cluster. One can recognise a Radical SAM core domain in the interval 49–265; sequence WSKKHTTVMI…ERVAKTKGFL (217 aa).

This sequence belongs to the radical SAM superfamily. Lipoyl synthase family. The cofactor is [4Fe-4S] cluster.

The protein resides in the cytoplasm. The enzyme catalyses [[Fe-S] cluster scaffold protein carrying a second [4Fe-4S](2+) cluster] + N(6)-octanoyl-L-lysyl-[protein] + 2 oxidized [2Fe-2S]-[ferredoxin] + 2 S-adenosyl-L-methionine + 4 H(+) = [[Fe-S] cluster scaffold protein] + N(6)-[(R)-dihydrolipoyl]-L-lysyl-[protein] + 4 Fe(3+) + 2 hydrogen sulfide + 2 5'-deoxyadenosine + 2 L-methionine + 2 reduced [2Fe-2S]-[ferredoxin]. Its pathway is protein modification; protein lipoylation via endogenous pathway; protein N(6)-(lipoyl)lysine from octanoyl-[acyl-carrier-protein]: step 2/2. Functionally, catalyzes the radical-mediated insertion of two sulfur atoms into the C-6 and C-8 positions of the octanoyl moiety bound to the lipoyl domains of lipoate-dependent enzymes, thereby converting the octanoylated domains into lipoylated derivatives. The chain is Lipoyl synthase from Rickettsia peacockii (strain Rustic).